A 32-amino-acid chain; its full sequence is Cytochrome b6-f complex subunit 7 (32 aa).

A helical membrane pass occupies residues 9–27 (AAVFWILIPIGLVGGALLL).

The protein belongs to the PetM family. In terms of assembly, the 4 large subunits of the cytochrome b6-f complex are cytochrome b6, subunit IV (17 kDa polypeptide, PetD), cytochrome f and the Rieske protein, while the 4 small subunits are PetG, PetL, PetM and PetN. The complex functions as a dimer.

It localises to the cellular thylakoid membrane. Functionally, component of the cytochrome b6-f complex, which mediates electron transfer between photosystem II (PSII) and photosystem I (PSI), cyclic electron flow around PSI, and state transitions. In Prochlorococcus marinus (strain MIT 9301), this protein is Cytochrome b6-f complex subunit 7.